The sequence spans 106 residues: uncharacterized protein (106 aa).

A helical membrane pass occupies residues 85–101 (AVALVLLCVSHHLTYLP).

The protein resides in the membrane. This is an uncharacterized protein from Saccharomyces cerevisiae (strain ATCC 204508 / S288c) (Baker's yeast).